Reading from the N-terminus, the 248-residue chain is Protein canopy homolog 4 (248 aa).

A signal peptide spans 1–21; sequence MGPVRLGILLFLFLAVHEAWA. Cystine bridges form between Cys-38-Cys-196, Cys-41-Cys-184, and Cys-94-Cys-156. Positions 200–248 are disordered; that stretch reads TWTGKEITDGEEKTEGEEEQEEEEEEEEEEGGDKMTKTGSHPKLDREDL. Over residues 213–230 the composition is skewed to acidic residues; it reads TEGEEEQEEEEEEEEEEG. Residues 231-248 show a composition bias toward basic and acidic residues; it reads GDKMTKTGSHPKLDREDL.

Belongs to the canopy family. As to quaternary structure, interacts with TLR4.

Its subcellular location is the secreted. Plays a role in the regulation of the cell surface expression of TLR4. This is Protein canopy homolog 4 (CNPY4) from Homo sapiens (Human).